The sequence spans 252 residues: Oil body-associated protein 2A (252 aa).

Positions 1-31 (MASSDGKPLPTPASVGGGGGSSTAPPGQPTT) are disordered. Residues 22–31 (STAPPGQPTT) show a composition bias toward low complexity.

It belongs to the OBAP family.

The protein is Oil body-associated protein 2A of Zea mays (Maize).